Here is a 189-residue protein sequence, read N- to C-terminus: Nucleoside triphosphate pyrophosphatase (189 aa).

Asp-70 serves as the catalytic Proton acceptor.

It belongs to the Maf family. A divalent metal cation serves as cofactor.

It is found in the cytoplasm. The catalysed reaction is a ribonucleoside 5'-triphosphate + H2O = a ribonucleoside 5'-phosphate + diphosphate + H(+). It catalyses the reaction a 2'-deoxyribonucleoside 5'-triphosphate + H2O = a 2'-deoxyribonucleoside 5'-phosphate + diphosphate + H(+). Functionally, nucleoside triphosphate pyrophosphatase. May have a dual role in cell division arrest and in preventing the incorporation of modified nucleotides into cellular nucleic acids. In Xylella fastidiosa (strain M23), this protein is Nucleoside triphosphate pyrophosphatase.